Reading from the N-terminus, the 272-residue chain is Glutamate racemase (272 aa).

Residues 10–11 (DS) and 42–43 (YG) each bind substrate. Cys-74 serves as the catalytic Proton donor/acceptor. 75–76 (NT) contributes to the substrate binding site. Catalysis depends on Cys-185, which acts as the Proton donor/acceptor. 186–187 (TH) provides a ligand contact to substrate.

Belongs to the aspartate/glutamate racemases family.

It carries out the reaction L-glutamate = D-glutamate. It functions in the pathway cell wall biogenesis; peptidoglycan biosynthesis. Functionally, provides the (R)-glutamate required for cell wall biosynthesis. This chain is Glutamate racemase, found in Bacillus velezensis (strain DSM 23117 / BGSC 10A6 / LMG 26770 / FZB42) (Bacillus amyloliquefaciens subsp. plantarum).